The primary structure comprises 384 residues: Urea transporter 1 (384 aa).

The tract at residues 1–23 (MDDNPTAVKLDQGGNQAPQGQGR) is disordered. Helical transmembrane passes span 61-81 (ISQV…VGLL), 85-105 (PWCA…ALLL), 111-131 (AITA…MAIY), 138-158 (FWWL…FSSA), and 169-189 (PVFT…TGHF). N-linked (GlcNAc...) asparagine glycosylation occurs at Asn-206. A run of 3 helical transmembrane segments spans residues 237–257 (GGIF…HAAI), 279–299 (GLWG…FMAL), and 327–347 (VVGL…FLLL).

It belongs to the urea transporter family. As to quaternary structure, homotrimer; each subunit contains a pore through which urea permeates. Identified in a complex with STOM.

The protein localises to the cell membrane. Its subcellular location is the basolateral cell membrane. It catalyses the reaction urea(in) = urea(out). Its function is as follows. Mediates the transport of urea driven by a concentration gradient across the cell membranes of erythrocytes and the renal inner medullary collecting duct which is critical to the urinary concentrating mechanism. Facilitates water transport in erythrocytes. The polypeptide is Urea transporter 1 (SLC14A1) (Ovis aries (Sheep)).